The following is a 277-amino-acid chain: GATA transcription factor 15 (277 aa).

The disordered stretch occupies residues 52 to 94; the sequence is AYDDHSTVTTSPSSPSSSSTGSVDCTLSLGTPSSRRAEPVAAA. Low complexity predominate over residues 58–74; sequence TVTTSPSSPSSSSTGSV. The segment at 154–179 adopts a GATA-type zinc-finger fold; it reads CANCGTASTPLWRNGPRGPKSLCNAC.

This sequence belongs to the type IV zinc-finger family. Class B subfamily.

Its function is as follows. Probable transcription factor that regulates organogenesis during transition from the vegetative to the reproductive phase. Regulates the expression of CYP78A11/PLA1, HD3A and MADS1 during reproductive development in rice. May act upstream of CYP78A11/PLA1 during panicle development. Acts independently of the photoperiodic and gibberellin signaling pathways. The polypeptide is GATA transcription factor 15 (Oryza sativa subsp. indica (Rice)).